Reading from the N-terminus, the 2009-residue chain is Sodium channel protein type 1 subunit alpha (2009 aa).

Over 1–128 the chain is Cytoplasmic; the sequence is MEQTVLVPPG…KIAIKILVHS (128 aa). A compositionally biased stretch (basic and acidic residues) spans 28–48; it reads RIAEEKAKNPKPDKKDDDENG. Residues 28–60 are disordered; that stretch reads RIAEEKAKNPKPDKKDDDENGPKPNSDLEAGKN. An I repeat occupies 110-454; that stretch reads ILTPFNPLRK…QQMIEQLKKQ (345 aa). Residues 129-146 traverse the membrane as a helical segment; that stretch reads LFSMLIMCTILTNCVFMT. The Extracellular portion of the chain corresponds to 147 to 152; that stretch reads MSNPPD. The chain crosses the membrane as a helical span at residues 153–177; sequence WTKNVEYTFTGIYTFESLIKIIARG. Topologically, residues 178–188 are cytoplasmic; that stretch reads FCLEDFTFLRD. Residues 189 to 205 form a helical membrane-spanning segment; the sequence is PWNWLDFTVITFAYVTE. The Extracellular portion of the chain corresponds to 206–213; sequence FVDLGNVS. An N-linked (GlcNAc...) asparagine glycan is attached at asparagine 211. The chain crosses the membrane as a helical span at residues 214-235; the sequence is ALRTFRVLRALKTISVIPGLKT. Residues 236-245 lie on the Cytoplasmic side of the membrane; the sequence is IVGALIQSVK. The helical transmembrane segment at 246-269 threads the bilayer; it reads KLSDVMILTVFCLSVFALIGLQLF. The Extracellular portion of the chain corresponds to 270 to 369; that stretch reads MGNLRNKCIQ…YGYTSFDTFS (100 aa). 2 cysteine pairs are disulfide-bonded: cysteine 277-cysteine 345 and cysteine 336-cysteine 351. Residues asparagine 284, asparagine 295, asparagine 301, asparagine 306, and asparagine 338 are each glycosylated (N-linked (GlcNAc...) asparagine). The pore-forming intramembrane region spans 370-384; that stretch reads WAFLSLFRLMTQDFW. The Extracellular segment spans residues 385–397; that stretch reads ENLYQLTLRAAGK. The chain crosses the membrane as a helical span at residues 398–423; sequence TYMIFFVLVIFLGSFYLINLILAVVA. Residues 424 to 768 are Cytoplasmic-facing; the sequence is MAYEEQNQAT…HVVNLVVMDP (345 aa). The disordered stretch occupies residues 455 to 529; it reads QEAAQQAATA…FQKSESEDSI (75 aa). Residues 456–466 show a composition bias toward low complexity; it reads EAAQQAATATA. At serine 470 the chain carries Phosphoserine. Low complexity predominate over residues 479–492; sequence LSDSSSEASKLSSK. Over residues 495–506 the composition is skewed to basic residues; sequence KERRNRRKKRKQ. A compositionally biased stretch (basic and acidic residues) spans 520–529; that stretch reads FQKSESEDSI. Phosphoserine is present on residues serine 523, serine 525, serine 550, serine 551, serine 607, and serine 730. Residues 584 to 627 are disordered; the sequence is VGSENDFADDEHSTFEDNESRRDSLFVPRRHGERRNSNLSQTSR. Residues 593–607 are compositionally biased toward basic and acidic residues; sequence DEHSTFEDNESRRDS. The II repeat unit spans residues 750–1022; that stretch reads CSPYWLKVKH…QIAVDRMHKG (273 aa). The chain crosses the membrane as a helical span at residues 769-787; sequence FVDLAITICIVLNTLFMAM. Topologically, residues 788 to 797 are extracellular; the sequence is EHYPMTDHFN. Residues 798 to 820 form a helical membrane-spanning segment; that stretch reads NVLTVGNLVFTGIFTAEMFLKII. Residues 821–830 are Cytoplasmic-facing; the sequence is AMDPYYYFQE. A helical membrane pass occupies residues 831–849; that stretch reads GWNIFDGFIVTLSLVELGL. Topologically, residues 850-854 are extracellular; the sequence is ANVEG. Residues 855-874 traverse the membrane as a helical segment; sequence LSVLRSFRLLRVFKLAKSWP. Over 875 to 891 the chain is Cytoplasmic; it reads TLNMLIKIIGNSVGALG. The chain crosses the membrane as a helical span at residues 892–912; sequence NLTLVLAIIVFIFAVVGMQLF. Residues 913–938 lie on the Extracellular side of the membrane; sequence GKSYKDCVCKIASDCQLPRWHMNDFF. An intrachain disulfide couples cysteine 921 to cysteine 927. An intramembrane region (pore-forming) is located at residues 939–952; the sequence is HSFLIVFRVLCGEW. At 953–965 the chain is on the extracellular side; that stretch reads IETMWDCMEVAGQ. Cysteine 959 and cysteine 968 are disulfide-bonded. A helical transmembrane segment spans residues 966-992; the sequence is AMCLTVFMMVMVIGNLVVLNLFLALLL. At 993-1218 the chain is on the cytoplasmic side; the sequence is SSFSADNLAA…RTCFRIVEHN (226 aa). The segment at 1129–1163 is disordered; that stretch reads TEDFSSESDLEESKEKLNESSSSSEGSTVDIGAPV. The III repeat unit spans residues 1200–1514; the sequence is RGKQWWNLRR…KKYYNAMKKL (315 aa). The helical transmembrane segment at 1219 to 1237 threads the bilayer; it reads WFETFIVFMILLSSGALAF. The Extracellular segment spans residues 1238–1250; sequence EDIYIDQRKTIKT. A helical transmembrane segment spans residues 1251–1276; that stretch reads MLEYADKVFTYIFILEMLLKWVAYGY. At 1277 to 1278 the chain is on the cytoplasmic side; it reads QT. Residues 1279–1304 traverse the membrane as a helical segment; that stretch reads YFTNAWCWLDFLIVDVSLVSLTANAL. Residues 1305–1313 are Extracellular-facing; sequence GYSELGAIK. Residues 1314–1332 traverse the membrane as a helical segment; the sequence is SLRTLRALRPLRALSRFEG. Residues 1333 to 1345 are Cytoplasmic-facing; sequence MRVVVNALLGAIP. A helical transmembrane segment spans residues 1346 to 1369; sequence SIMNVLLVCLIFWLIFSIMGVNLF. Over 1370–1415 the chain is Extracellular; the sequence is AGKFYHCINTTTGDRFDIEDVNNHTDCLKLIERNETARWKNVKVNF. Cysteine 1376 and cysteine 1396 are joined by a disulfide. 3 N-linked (GlcNAc...) asparagine glycosylation sites follow: asparagine 1378, asparagine 1392, and asparagine 1403. Positions 1416–1433 form an intramembrane region, pore-forming; that stretch reads DNVGFGYLSLLQVATFKG. The Extracellular portion of the chain corresponds to 1434–1457; sequence WMDIMYAAVDSRNVELQPKYEESL. The helical transmembrane segment at 1458-1483 threads the bilayer; it reads YMYLYFVIFIIFGSFFTLNLFIGVII. At 1484-1541 the chain is on the cytoplasmic side; that stretch reads DNFNQQKKKFGGQDIFMTEEQKKYYNAMKKLGSKKPQKPIPRPGNKFQGMVFDFVTRQ. Serine 1516 carries the post-translational modification Phosphoserine; by PKC. An IV repeat occupies 1523 to 1821; sequence IPRPGNKFQG…WEKFDPDATQ (299 aa). Residues 1542–1560 traverse the membrane as a helical segment; sequence VFDISIMILICLNMVTMMV. At 1561–1571 the chain is on the extracellular side; sequence ETDDQSEYVTT. Residues 1561–1571 form an S1-S2 loop of repeat IV region; the sequence is ETDDQSEYVTT. A helical membrane pass occupies residues 1572 to 1593; sequence ILSRINLVFIVLFTGECVLKLI. The Cytoplasmic portion of the chain corresponds to 1594-1601; that stretch reads SLRHYYFT. The chain crosses the membrane as a helical span at residues 1602–1623; that stretch reads IGWNIFDFVVVILSIVGMFLAE. Positions 1619–1636 are S3b-S4 loop of repeat IV; that stretch reads MFLAELIEKYFVSPTLFR. Topologically, residues 1624–1636 are extracellular; the sequence is LIEKYFVSPTLFR. Residues 1637–1655 traverse the membrane as a helical segment; the sequence is VIRLARIGRILRLIKGAKG. Topologically, residues 1656–1665 are cytoplasmic; it reads IRTLLFALMM. Residues 1666–1688 form a helical membrane-spanning segment; sequence SLPALFNIGLLLFLVMFIYAIFG. Residues 1689–1711 are Extracellular-facing; that stretch reads MSNFAYVKREVGIDDMFNFETFG. The pore-forming intramembrane region spans 1712 to 1726; it reads NSMICLFQITTSAGW. Topologically, residues 1727–1759 are extracellular; it reads DGLLAPILNSKPPDCDPNKVNPGSSVKGDCGNP. Cysteine 1741 and cysteine 1756 are disulfide-bonded. The chain crosses the membrane as a helical span at residues 1760 to 1788; sequence SVGIFFFVSYIIISFLVVVNMYIAVILEN. The Cytoplasmic segment spans residues 1789-2009; it reads FSVATEESAE…EGKDEKAKGK (221 aa). One can recognise an IQ domain in the interval 1915–1944; that stretch reads EEVSAVIIQRAYRRHLLKRTVKQASFTYNK. The segment at 1986–2009 is disordered; it reads YDRVTKPIVEKHEQEGKDEKAKGK. Over residues 1988-2009 the composition is skewed to basic and acidic residues; sequence RVTKPIVEKHEQEGKDEKAKGK.

The protein belongs to the sodium channel (TC 1.A.1.10) family. Nav1.1/SCN1A subfamily. As to quaternary structure, the Nav1.1 voltage-gated sodium channel consists of an ion-conducting alpha subunit SCN1A which is functional on its own regulated by one or more beta-1 (SCN1B), beta-2 (SCN2B), beta-3 (SCN3B) and beta-4 (SCN4B) subunits. SCN1B and SCN3B are non-covalently associated with SCN1A. SCN2B and SCN4B are disulfide-linked to SCN1A. SCN1B regulates both the expression at the plasma membrane and the voltage dependence of Nav1.1 inactivation. SCN3B and SCN4B reduce Nav1.1 conductance. Probably interacts with TMEM233; modulates the gating properties of NaV1.1. Interacts with FGF13; regulates the steady-state inactivation of Nav.1.1. Phosphorylation at Ser-1516 by PKC in a highly conserved cytoplasmic loop slows inactivation of the sodium channel and reduces peak sodium currents.

It localises to the cell membrane. It carries out the reaction Na(+)(in) = Na(+)(out). Activated by the spider toxins Hm1a and Hm1b (H.maculata, AC P60992 and AC P0DOC5) eliciting acute pain and mechanical allodynia. Inhibited by the conotoxin GVIIJ. Inhibited by the spider beta/delta-theraphotoxin-Pre1a. Functionally, pore-forming subunit of Nav1.1, a voltage-gated sodium (Nav) channel that directly mediates the depolarizing phase of action potentials in excitable membranes. Navs, also called VGSCs (voltage-gated sodium channels) or VDSCs (voltage-dependent sodium channels), operate by switching between closed and open conformations depending on the voltage difference across the membrane. In the open conformation they allow Na(+) ions to selectively pass through the pore, along their electrochemical gradient. The influx of Na(+) ions provokes membrane depolarization, initiating the propagation of electrical signals throughout cells and tissues. By regulating the excitability of neurons, ensures that they respond appropriately to synaptic inputs, maintaining the balance between excitation and inhibition in brain neural circuits. Nav1.1 plays a role in controlling the excitability and action potential propagation from somatosensory neurons, thereby contributing to the sensory perception of mechanically-induced pain. The sequence is that of Sodium channel protein type 1 subunit alpha from Homo sapiens (Human).